A 349-amino-acid chain; its full sequence is tRNA pseudouridine synthase D (349 aa).

Residue phenylalanine 27 participates in substrate binding. Aspartate 80 (nucleophile) is an active-site residue. Residue asparagine 129 coordinates substrate. One can recognise a TRUD domain in the interval glycine 155–leucine 303. Phenylalanine 329 is a substrate binding site.

The protein belongs to the pseudouridine synthase TruD family.

The enzyme catalyses uridine(13) in tRNA = pseudouridine(13) in tRNA. In terms of biological role, responsible for synthesis of pseudouridine from uracil-13 in transfer RNAs. The sequence is that of tRNA pseudouridine synthase D from Escherichia coli (strain SMS-3-5 / SECEC).